The primary structure comprises 542 residues: NXPE family member 4 (542 aa).

A signal peptide spans 1–26; that stretch reads MKMMASRKSLWVLLFIVIFWISFTVF. Residues N91, N92, N159, and N223 are each glycosylated (N-linked (GlcNAc...) asparagine).

The protein belongs to the NXPE family.

The protein localises to the secreted. This is NXPE family member 4 (Nxpe4) from Rattus norvegicus (Rat).